The primary structure comprises 638 residues: 1-deoxy-D-xylulose-5-phosphate synthase (638 aa).

Residues H78 and 119–121 (AHS) each bind thiamine diphosphate. D150 is a Mg(2+) binding site. Thiamine diphosphate is bound by residues 151-152 (GS), N179, Y288, and E370. N179 contacts Mg(2+).

Belongs to the transketolase family. DXPS subfamily. As to quaternary structure, homodimer. It depends on Mg(2+) as a cofactor. The cofactor is thiamine diphosphate.

The catalysed reaction is D-glyceraldehyde 3-phosphate + pyruvate + H(+) = 1-deoxy-D-xylulose 5-phosphate + CO2. The protein operates within metabolic intermediate biosynthesis; 1-deoxy-D-xylulose 5-phosphate biosynthesis; 1-deoxy-D-xylulose 5-phosphate from D-glyceraldehyde 3-phosphate and pyruvate: step 1/1. In terms of biological role, catalyzes the acyloin condensation reaction between C atoms 2 and 3 of pyruvate and glyceraldehyde 3-phosphate to yield 1-deoxy-D-xylulose-5-phosphate (DXP). The chain is 1-deoxy-D-xylulose-5-phosphate synthase from Brucella anthropi (strain ATCC 49188 / DSM 6882 / CCUG 24695 / JCM 21032 / LMG 3331 / NBRC 15819 / NCTC 12168 / Alc 37) (Ochrobactrum anthropi).